A 314-amino-acid polypeptide reads, in one-letter code: Adenosine receptor A3 (314 aa).

At 1–14 (MAVNGTALLLANVT) the chain is on the extracellular side. N-linked (GlcNAc...) asparagine glycans are attached at residues asparagine 4 and asparagine 12. Residues 15-37 (YITVEILIGLCAIVGNVLVIWVV) traverse the membrane as a helical segment. The Cytoplasmic portion of the chain corresponds to 38 to 48 (KLNPSLQTTTF). Residues 49 to 72 (YFIVSLALADIAVGVLVMPLAIVI) traverse the membrane as a helical segment. The Extracellular segment spans residues 73 to 84 (SLGITIQFYNCL). Cysteine 83 and cysteine 166 are disulfide-bonded. A helical transmembrane segment spans residues 85–106 (FMTCLLLIFTHASIMSLLAIAV). The Cytoplasmic segment spans residues 107–126 (DRYLRVKLTVRYRRVTTQRR). Residues 127-148 (IWLALGLCWLVSFLVGLTPMFG) form a helical membrane-spanning segment. Residues 149–177 (WNMKLTSEHQRNVTFLSCQFSSVMRMDYM) lie on the Extracellular side of the membrane. N-linked (GlcNAc...) asparagine glycosylation is present at asparagine 160. The helical transmembrane segment at 178-198 (VYFSFFTWILIPLVVMCAIYL) threads the bilayer. Residues 199-231 (DIFYVIRNKLNQNFSSSKETGAFYGREFKTAKS) lie on the Cytoplasmic side of the membrane. Residues 232-255 (LFLVLFLFAFSWLPLSIINCITYF) traverse the membrane as a helical segment. Topologically, residues 256-261 (HGEVPQ) are extracellular. The helical transmembrane segment at 262 to 284 (IILYLGILLSHANSMMNPIVYAY) threads the bilayer. The Cytoplasmic segment spans residues 285–314 (KIKKFKETYLLIFKTYMICQSSDSLDSSTE). A lipid anchor (S-palmitoyl cysteine) is attached at cysteine 303.

Belongs to the G-protein coupled receptor 1 family.

The protein localises to the cell membrane. Receptor for adenosine. The activity of this receptor is mediated by G proteins which inhibits adenylyl cyclase. The sequence is that of Adenosine receptor A3 (ADORA3) from Canis lupus familiaris (Dog).